Here is a 469-residue protein sequence, read N- to C-terminus: MGKTLYQKLFDAHVVYEAEGETPILYINRHLIHEVTSPQAFDGLRVAGRQVRQVNKTFGTMDHSISTQVRDVNLLEGQAKIQVLELDKNCKATGIELFDMNTKQQGIVHVMGPEQGLTLPGMTIVCGDSHTATHGAFGALAFGIGTSEVEHVLATQTLKQARAKNMKVEVRGKVNPGITAKDIVLAIIGKTTMAGGTGHVVEFCGEAIRDLSMEGRMTVCNMAIEFGAKAGLIAPDETTFEYLKDRPHAPKGKDWDDAIEYWKTLKSDDDAQFDTVVVLEAKDIAPQVTWGTNPGQVIAIDQLVPNPAEMSDPVTKTSAEKALAYIGLQANTDLKDVPVDQVFIGSCTNSRIEDLRAAAAVMKGRKKADNVKRVLVVPGSGLVKEQAEKEGLDKIFIAAGAEWRNPGCSMCLGMNDDRLGEWERCASTSNRNFEGRQGRNGRTHLVSPAMAAAAAVFGKFVDIRTIKLN.

[4Fe-4S] cluster contacts are provided by cysteine 347, cysteine 408, and cysteine 411.

The protein belongs to the aconitase/IPM isomerase family. LeuC type 1 subfamily. In terms of assembly, heterodimer of LeuC and LeuD. The cofactor is [4Fe-4S] cluster.

The catalysed reaction is (2R,3S)-3-isopropylmalate = (2S)-2-isopropylmalate. Its pathway is amino-acid biosynthesis; L-leucine biosynthesis; L-leucine from 3-methyl-2-oxobutanoate: step 2/4. Functionally, catalyzes the isomerization between 2-isopropylmalate and 3-isopropylmalate, via the formation of 2-isopropylmaleate. This Actinobacillus succinogenes (strain ATCC 55618 / DSM 22257 / CCUG 43843 / 130Z) protein is 3-isopropylmalate dehydratase large subunit.